The following is a 107-amino-acid chain: Universal stress protein B homolog (107 aa).

2 consecutive transmembrane segments (helical) span residues 6 to 25 and 89 to 106; these read TILF…YVTA and LFIL…VAFM.

This sequence belongs to the universal stress protein B family.

The protein resides in the cell inner membrane. The chain is Universal stress protein B homolog from Vibrio cholerae serotype O1 (strain ATCC 39541 / Classical Ogawa 395 / O395).